The sequence spans 78 residues: Large ribosomal subunit protein bL28 (78 aa).

The segment at 1-21 (MSRVCQVTGKKPMVGNNRSHA) is disordered.

The protein belongs to the bacterial ribosomal protein bL28 family.

This is Large ribosomal subunit protein bL28 from Shewanella baltica (strain OS223).